We begin with the raw amino-acid sequence, 698 residues long: Protein SST2 (698 aa).

Residues 10 to 203 form a fungal-DR region; the sequence is ELSSKNFSRT…GAKPNVWSPT (194 aa). Serine 252 carries the post-translational modification Phosphoserine. The 86-residue stretch at 273-358 folds into the DEP domain; the sequence is SNAGIRLFEN…SRSSFFTLSK (86 aa). Serine 408 carries the phosphoserine modification. Residues 420-689 enclose the RGS domain; that stretch reads KLDYVLTDPG…TQSDVYKDAS (270 aa). Position 539 is a phosphoserine; by MAPK (serine 539). The segment at 545–586 is disordered; sequence FPTNLYDPSPASAESAASSISSTEADTLGEPPEVSLKPSKNL. Over residues 551 to 570 the composition is skewed to low complexity; it reads DPSPASAESAASSISSTEAD. Serine 587 is modified (phosphoserine).

In terms of processing, phosphorylated by FUS3 and KSS1.

Its function is as follows. Desensitization to alpha-factor pheromone. Is involved in regulating the signaling pathway for responding to mating pheromone. The polypeptide is Protein SST2 (SST2) (Saccharomyces cerevisiae (strain ATCC 204508 / S288c) (Baker's yeast)).